The chain runs to 571 residues: Urease subunit alpha (571 aa).

The Urease domain maps to 133-571 (GGIDTHVHFI…LPLTQRYFLF (439 aa)). Ni(2+)-binding residues include His-138, His-140, and Lys-221. The residue at position 221 (Lys-221) is an N6-carboxylysine. His-223 contributes to the substrate binding site. Ni(2+) is bound by residues His-250 and His-276. The Proton donor role is filled by His-324. A Ni(2+)-binding site is contributed by Asp-364.

The protein belongs to the metallo-dependent hydrolases superfamily. Urease alpha subunit family. In terms of assembly, heterotrimer of UreA (gamma), UreB (beta) and UreC (alpha) subunits. Three heterotrimers associate to form the active enzyme. Ni cation is required as a cofactor. Post-translationally, carboxylation allows a single lysine to coordinate two nickel ions.

It is found in the cytoplasm. It carries out the reaction urea + 2 H2O + H(+) = hydrogencarbonate + 2 NH4(+). It participates in nitrogen metabolism; urea degradation; CO(2) and NH(3) from urea (urease route): step 1/1. The sequence is that of Urease subunit alpha from Staphylococcus aureus (strain MRSA252).